The primary structure comprises 130 residues: Small ribosomal subunit protein uS8 (130 aa).

Belongs to the universal ribosomal protein uS8 family. In terms of assembly, part of the 30S ribosomal subunit.

Its function is as follows. One of the primary rRNA binding proteins, it binds directly to 16S rRNA central domain where it helps coordinate assembly of the platform of the 30S subunit. The protein is Small ribosomal subunit protein uS8 of Haloquadratum walsbyi (strain DSM 16790 / HBSQ001).